Consider the following 455-residue polypeptide: Bifunctional protein GlmU (455 aa).

A pyrophosphorylase region spans residues 1-228 (MNNTLTTIIL…EFEIEGVNNR (228 aa)). UDP-N-acetyl-alpha-D-glucosamine is bound by residues 10-13 (LAAG), lysine 24, glutamine 75, 80-81 (GT), 102-104 (YGD), glycine 138, glutamate 153, asparagine 168, and asparagine 226. Aspartate 104 lines the Mg(2+) pocket. Residue asparagine 226 coordinates Mg(2+). The linker stretch occupies residues 229–249 (QQLAQLERKWQAKLVEDLQVQ). The segment at 250–455 (GVQFADPNRV…DNYQRPEKKK (206 aa)) is N-acetyltransferase. UDP-N-acetyl-alpha-D-glucosamine-binding residues include arginine 332 and lysine 350. Histidine 362 acts as the Proton acceptor in catalysis. 2 residues coordinate UDP-N-acetyl-alpha-D-glucosamine: tyrosine 365 and asparagine 376. Acetyl-CoA contacts are provided by residues alanine 379, 385–386 (NY), alanine 422, and arginine 439.

In the N-terminal section; belongs to the N-acetylglucosamine-1-phosphate uridyltransferase family. The protein in the C-terminal section; belongs to the transferase hexapeptide repeat family. As to quaternary structure, homotrimer. Mg(2+) is required as a cofactor.

The protein localises to the cytoplasm. The catalysed reaction is alpha-D-glucosamine 1-phosphate + acetyl-CoA = N-acetyl-alpha-D-glucosamine 1-phosphate + CoA + H(+). It catalyses the reaction N-acetyl-alpha-D-glucosamine 1-phosphate + UTP + H(+) = UDP-N-acetyl-alpha-D-glucosamine + diphosphate. It participates in nucleotide-sugar biosynthesis; UDP-N-acetyl-alpha-D-glucosamine biosynthesis; N-acetyl-alpha-D-glucosamine 1-phosphate from alpha-D-glucosamine 6-phosphate (route II): step 2/2. Its pathway is nucleotide-sugar biosynthesis; UDP-N-acetyl-alpha-D-glucosamine biosynthesis; UDP-N-acetyl-alpha-D-glucosamine from N-acetyl-alpha-D-glucosamine 1-phosphate: step 1/1. The protein operates within bacterial outer membrane biogenesis; LPS lipid A biosynthesis. Catalyzes the last two sequential reactions in the de novo biosynthetic pathway for UDP-N-acetylglucosamine (UDP-GlcNAc). The C-terminal domain catalyzes the transfer of acetyl group from acetyl coenzyme A to glucosamine-1-phosphate (GlcN-1-P) to produce N-acetylglucosamine-1-phosphate (GlcNAc-1-P), which is converted into UDP-GlcNAc by the transfer of uridine 5-monophosphate (from uridine 5-triphosphate), a reaction catalyzed by the N-terminal domain. The chain is Bifunctional protein GlmU from Psychrobacter sp. (strain PRwf-1).